Consider the following 287-residue polypeptide: Large ribosomal subunit protein uL2 (287 aa).

Composition is skewed to basic residues over residues 209-220 and 258-287; these read GRNRWKARRPKV and KTRK…GRQS. Residues 209–287 form a disordered region; sequence GRNRWKARRP…SKRSRGGRQS (79 aa).

This sequence belongs to the universal ribosomal protein uL2 family. In terms of assembly, part of the 50S ribosomal subunit. Forms a bridge to the 30S subunit in the 70S ribosome.

One of the primary rRNA binding proteins. Required for association of the 30S and 50S subunits to form the 70S ribosome, for tRNA binding and peptide bond formation. It has been suggested to have peptidyltransferase activity; this is somewhat controversial. Makes several contacts with the 16S rRNA in the 70S ribosome. The chain is Large ribosomal subunit protein uL2 from Acaryochloris marina (strain MBIC 11017).